We begin with the raw amino-acid sequence, 533 residues long: Retinoid isomerohydrolase (533 aa).

The S-palmitoyl cysteine; in membrane form moiety is linked to residue Cys112. Ser117 carries the post-translational modification Phosphoserine. His180 lines the Fe cation pocket. Residue Cys231 is the site of S-palmitoyl cysteine; in membrane form attachment. Fe cation contacts are provided by His241 and His313. Cys329 carries S-palmitoyl cysteine; in membrane form lipidation. Fe cation is bound at residue His527.

Belongs to the carotenoid oxygenase family. It depends on Fe(2+) as a cofactor. In terms of processing, palmitoylation by LRAT regulates ligand binding specificity; the palmitoylated form (membrane form) specifically binds all-trans-retinyl-palmitate, while the soluble unpalmitoylated form binds all-trans-retinol (vitamin A). Retinal pigment epithelium specific.

Its subcellular location is the cytoplasm. The protein resides in the cell membrane. The protein localises to the microsome membrane. It carries out the reaction an all-trans-retinyl ester + H2O = 11-cis-retinol + a fatty acid + H(+). The catalysed reaction is lutein = (3R,3'S)-zeaxanthin. It catalyses the reaction all-trans-retinyl hexadecanoate + H2O = 11-cis-retinol + hexadecanoate + H(+). Its function is as follows. Critical isomerohydrolase in the retinoid cycle involved in regeneration of 11-cis-retinal, the chromophore of rod and cone opsins. Catalyzes the cleavage and isomerization of all-trans-retinyl fatty acid esters to 11-cis-retinol which is further oxidized by 11-cis retinol dehydrogenase to 11-cis-retinal for use as visual chromophore. Essential for the production of 11-cis retinal for both rod and cone photoreceptors. Also capable of catalyzing the isomerization of lutein to meso-zeaxanthin an eye-specific carotenoid. The soluble form binds vitamin A (all-trans-retinol), making it available for LRAT processing to all-trans-retinyl ester. The membrane form, palmitoylated by LRAT, binds all-trans-retinyl esters, making them available for IMH (isomerohydrolase) processing to all-cis-retinol. The soluble form is regenerated by transferring its palmitoyl groups onto 11-cis-retinol, a reaction catalyzed by LRAT. This is Retinoid isomerohydrolase (RPE65) from Gallus gallus (Chicken).